A 95-amino-acid chain; its full sequence is MAINSKVVAQVAHLARLKVDPQDSNALSDRLNDILAMVDQLQQADVDGVAPMAHPLDVTQPLRDDVVTEPNIRDKALAIAPAVENGCFLVPRVIE.

Belongs to the GatC family. As to quaternary structure, heterotrimer of A, B and C subunits.

The catalysed reaction is L-glutamyl-tRNA(Gln) + L-glutamine + ATP + H2O = L-glutaminyl-tRNA(Gln) + L-glutamate + ADP + phosphate + H(+). It carries out the reaction L-aspartyl-tRNA(Asn) + L-glutamine + ATP + H2O = L-asparaginyl-tRNA(Asn) + L-glutamate + ADP + phosphate + 2 H(+). In terms of biological role, allows the formation of correctly charged Asn-tRNA(Asn) or Gln-tRNA(Gln) through the transamidation of misacylated Asp-tRNA(Asn) or Glu-tRNA(Gln) in organisms which lack either or both of asparaginyl-tRNA or glutaminyl-tRNA synthetases. The reaction takes place in the presence of glutamine and ATP through an activated phospho-Asp-tRNA(Asn) or phospho-Glu-tRNA(Gln). This is Aspartyl/glutamyl-tRNA(Asn/Gln) amidotransferase subunit C from Alcanivorax borkumensis (strain ATCC 700651 / DSM 11573 / NCIMB 13689 / SK2).